Reading from the N-terminus, the 122-residue chain is UPF0102 protein Dred_2035 (122 aa).

This sequence belongs to the UPF0102 family.

This chain is UPF0102 protein Dred_2035, found in Desulforamulus reducens (strain ATCC BAA-1160 / DSM 100696 / MI-1) (Desulfotomaculum reducens).